The sequence spans 111 residues: HTH-type transcriptional regulator SinR (111 aa).

An HTH cro/C1-type domain is found at I6–L61. Residues L17–R36 constitute a DNA-binding region (H-T-H motif). Residues K65–K103 form the Sin domain.

In terms of assembly, homotetramer. Also associates with SinI.

Functionally, affects autolysin level and flagellation. In Bacillus licheniformis, this protein is HTH-type transcriptional regulator SinR (sinR).